We begin with the raw amino-acid sequence, 413 residues long: Cardiolipin synthase B (413 aa).

2 PLD phosphodiesterase domains span residues 108-135 (IFRR…SAEH) and 285-312 (RRRP…DPLS). Catalysis depends on residues H113, K115, D120, H290, K292, and D297. The segment at 388-413 (AQVPPPAQPEMETQDRVDPENTGVKP) is disordered.

It belongs to the phospholipase D family. Cardiolipin synthase subfamily. ClsB sub-subfamily.

It localises to the cell membrane. The catalysed reaction is 2 a 1,2-diacyl-sn-glycero-3-phospho-(1'-sn-glycerol) = a cardiolipin + glycerol. Its function is as follows. Catalyzes the phosphatidyl group transfer from one phosphatidylglycerol molecule to another to form cardiolipin (CL) (diphosphatidylglycerol) and glycerol. In Salmonella typhimurium (strain LT2 / SGSC1412 / ATCC 700720), this protein is Cardiolipin synthase B.